The sequence spans 553 residues: Non-SCF-type F-box protein ROY1 (553 aa).

An F-box domain is found at 3–49; it reads FQDQDIFIVFSHASLFLNQNDLLSLSLTSKKMHDMIAIPRLYSNIHI.

As to quaternary structure, interacts with SKP1 and YPT32; SKP1 is required for the interaction with YPT32.

Its subcellular location is the cytoplasm. The protein localises to the nucleus. The protein resides in the cytoplasmic vesicle membrane. Its function is as follows. Non-SCF-type F-box protein involved in the endocytic with the vacuolar sorting pathway. Acts as a repressor of YPT52 by inhibiting the formation of active, GTP-bound, YPT52. Involved in the defense mechanism against methylmercury toxicity. The chain is Non-SCF-type F-box protein ROY1 (ROY1) from Saccharomyces cerevisiae (strain ATCC 204508 / S288c) (Baker's yeast).